Here is a 661-residue protein sequence, read N- to C-terminus: Threonine--tRNA ligase (661 aa).

Positions 1 to 64 (MSQAISLTFP…TTGRIEIITR (64 aa)) constitute a TGS domain. Residues 245-546 (DHRRLGREMD…LIENFAGHMP (302 aa)) are catalytic. Zn(2+) is bound by residues cysteine 341, histidine 392, and histidine 523.

It belongs to the class-II aminoacyl-tRNA synthetase family. As to quaternary structure, homodimer. Zn(2+) serves as cofactor.

The protein localises to the cytoplasm. The enzyme catalyses tRNA(Thr) + L-threonine + ATP = L-threonyl-tRNA(Thr) + AMP + diphosphate + H(+). In terms of biological role, catalyzes the attachment of threonine to tRNA(Thr) in a two-step reaction: L-threonine is first activated by ATP to form Thr-AMP and then transferred to the acceptor end of tRNA(Thr). Also edits incorrectly charged L-seryl-tRNA(Thr). The chain is Threonine--tRNA ligase from Rhizobium johnstonii (strain DSM 114642 / LMG 32736 / 3841) (Rhizobium leguminosarum bv. viciae).